Here is a 101-residue protein sequence, read N- to C-terminus: MIFKRAVSTLIPPKVVSSKNIGSAPNAKRIANVVHFYKSLPQGPAPAIKANTRLARYKAKYFDGDNASGKPLWHFALGIIAFGYSMEYYFHLRHHKGAEEH.

Residues 1-6 (MIFKRA) constitute a mitochondrion transit peptide.

The protein belongs to the ATPase F chain family. F-type ATPases have 2 components, CF(1) - the catalytic core - and CF(0) - the membrane proton channel. In yeast, the dimeric form of ATP synthase consists of 17 polypeptides: alpha, beta, gamma, delta, epsilon, 4 (B), 5 (OSCP), 6 (A), 8, 9 (C), d, E (Tim11), f, g, h, i/j and k.

The protein resides in the mitochondrion. It localises to the mitochondrion inner membrane. Its function is as follows. Mitochondrial membrane ATP synthase (F(1)F(0) ATP synthase or Complex V) produces ATP from ADP in the presence of a proton gradient across the membrane which is generated by electron transport complexes of the respiratory chain. F-type ATPases consist of two structural domains, F(1) - containing the extramembraneous catalytic core and F(0) - containing the membrane proton channel, linked together by a central stalk and a peripheral stalk. During catalysis, ATP synthesis in the catalytic domain of F(1) is coupled via a rotary mechanism of the central stalk subunits to proton translocation. Part of the complex F(0) domain. Minor subunit located with subunit a in the membrane. In Saccharomyces cerevisiae (strain ATCC 204508 / S288c) (Baker's yeast), this protein is ATP synthase subunit f, mitochondrial (ATP17).